Consider the following 603-residue polypeptide: DNA mismatch repair protein MutL (603 aa).

Basic and acidic residues predominate over residues 336-346 (EVSKKQKEQQK). The interval 336–372 (EVSKKQKEQQKSEQIQMSFEENRQPKEPPTLFSKPNI) is disordered.

Belongs to the DNA mismatch repair MutL/HexB family.

This protein is involved in the repair of mismatches in DNA. It is required for dam-dependent methyl-directed DNA mismatch repair. May act as a 'molecular matchmaker', a protein that promotes the formation of a stable complex between two or more DNA-binding proteins in an ATP-dependent manner without itself being part of a final effector complex. This Listeria innocua serovar 6a (strain ATCC BAA-680 / CLIP 11262) protein is DNA mismatch repair protein MutL.